A 150-amino-acid chain; its full sequence is Putative biopolymer transport protein ExbB-like 2 (150 aa).

3 helical membrane passes run 5–25, 63–83, and 97–117; these read VDYGIIGFLIFLSVIVIAIAI, APYIGLLGTVMGIMLTFMDLG, and LALALKATGMGLLVAIPAIVI.

The protein belongs to the ExbB/TolQ family.

It localises to the cell inner membrane. The polypeptide is Putative biopolymer transport protein ExbB-like 2 (Helicobacter pylori (strain J99 / ATCC 700824) (Campylobacter pylori J99)).